Consider the following 201-residue polypeptide: Large ribosomal subunit protein bL25 (201 aa).

This sequence belongs to the bacterial ribosomal protein bL25 family. CTC subfamily. Part of the 50S ribosomal subunit; part of the 5S rRNA/L5/L18/L25 subcomplex. Contacts the 5S rRNA. Binds to the 5S rRNA independently of L5 and L18.

This is one of the proteins that binds to the 5S RNA in the ribosome where it forms part of the central protuberance. The sequence is that of Large ribosomal subunit protein bL25 from Burkholderia vietnamiensis (strain G4 / LMG 22486) (Burkholderia cepacia (strain R1808)).